Reading from the N-terminus, the 340-residue chain is DNA primase large subunit PriL (340 aa).

Positions 229, 301, 310, and 318 each coordinate [4Fe-4S] cluster.

It belongs to the eukaryotic-type primase large subunit family. Heterodimer of a small subunit (PriS) and a large subunit (PriL). It depends on [4Fe-4S] cluster as a cofactor.

Its function is as follows. Regulatory subunit of DNA primase, an RNA polymerase that catalyzes the synthesis of short RNA molecules used as primers for DNA polymerase during DNA replication. Stabilizes and modulates the activity of the small subunit, increasing the rate of DNA synthesis, and conferring RNA synthesis capability. The DNA polymerase activity may enable DNA primase to also catalyze primer extension after primer synthesis. May also play a role in DNA repair. This Thermoplasma acidophilum (strain ATCC 25905 / DSM 1728 / JCM 9062 / NBRC 15155 / AMRC-C165) protein is DNA primase large subunit PriL.